A 7481-amino-acid polypeptide reads, in one-letter code: Polyketide synthase GfsA (7481 aa).

The interval 24-1020 is loading module (LM); the sequence is ASDEPIAVIG…ETAEFVRARL (997 aa). The Ketosynthase family 3 (KS3) 1 domain occupies 26–451; that stretch reads DEPIAVIGLS…GTNCHVVVSA (426 aa). Positions 60–80 are disordered; the sequence is RVPADRETPPSTEEESADGEA. Gln-197 acts as the For decarboxylation activity of LM in catalysis. Ser-662 functions as the For acyltransferase activity of LM in the catalytic mechanism. One can recognise a Carrier 1 domain in the interval 945-1020; the sequence is PDPVETVRQL…ETAEFVRARL (76 aa). O-(pantetheine 4'-phosphoryl)serine is present on Ser-980. In terms of domain architecture, Ketosynthase family 3 (KS3) 2 spans 1038–1454; that stretch reads DEPIAVVAMS…GTNAHVILEQ (417 aa). 4 module regions span residues 1038–2517, 2538–4063, 4084–5636, and 5655–7400; these read DEPI…AGEL, EDPI…LQRI, DDPI…GSEV, and DEPV…GEQL. Catalysis depends on for beta-ketoacyl synthase 1 activity residues Cys-1201, His-1336, and His-1376. The Carrier 2 domain occupies 2442–2517; sequence RVLLDLVRGR…ALAEHLAGEL (76 aa). Ser-2477 carries the O-(pantetheine 4'-phosphoryl)serine modification. In terms of domain architecture, Ketosynthase family 3 (KS3) 3 spans 2538-2964; sequence EDPIAIVAMS…GTNAHVIIEE (427 aa). Active-site for beta-ketoacyl synthase 2 activity residues include Cys-2711, His-2846, and His-2886. The Carrier 3 domain maps to 3988-4063; that stretch reads QALQDLVLTE…ATTEYLLQRI (76 aa). The residue at position 4023 (Ser-4023) is an O-(pantetheine 4'-phosphoryl)serine. Residues 4084-4514 enclose the Ketosynthase family 3 (KS3) 4 domain; it reads DDPIAIVAMG…GTNAHVILEQ (431 aa). Residues Cys-4261, His-4396, and His-4436 each act as for beta-ketoacyl synthase 3 activity in the active site. In terms of domain architecture, Carrier 4 spans 5561 to 5636; the sequence is TALLDLIRGQ…ALAEYVGSEV (76 aa). Ser-5596 is subject to O-(pantetheine 4'-phosphoryl)serine. One can recognise a Ketosynthase family 3 (KS3) 5 domain in the interval 5655–6081; the sequence is DEPVAIIGMS…GTNAHVILEQ (427 aa). Catalysis depends on for beta-ketoacyl synthase 4 activity residues Cys-5828, His-5963, and His-6003. The tract at residues 6561-6685 is N-terminal hotdog fold; that stretch reads HPLLGAAVAL…GVLASGAATV (125 aa). Residues 6561–6841 form the PKS/mFAS DH domain; sequence HPLLGAAVAL…LRPVSADTIA (281 aa). The active-site Proton acceptor; for dehydratase activity is the His-6593. Residues 6700–6841 form a C-terminal hotdog fold region; the sequence is ATAVDIDGLY…LRPVSADTIA (142 aa). Catalysis depends on Asp-6761, which acts as the Proton donor; for dehydratase activity. One can recognise a Carrier 5 domain in the interval 7325–7400; sequence QELLDFVCEH…LLAGHIGEQL (76 aa). Ser-7360 bears the O-(pantetheine 4'-phosphoryl)serine mark.

Homodimer. The loading module (LM, residues 13-926) dimerizes. LM cross-links to its cognate acyl-carrier domain in a manner that seems physiological; mutation of residues in the 2 domains alters reactions efficiency in a manner predicted by the cross-linked crystal. The cofactor is pantetheine 4'-phosphate.

It participates in antibiotic biosynthesis. Its function is as follows. First protein in the synthesis of the 16-membered macrolide antibiotics FD-891 and FD-892. Composed of 5 modules; the first is a loading module (LM) that synthesizes a starter unit used by the first elongation module for polyketide chain elongation. The starter unit is extended by multiple rounds of addition of malonyl-CoA or methylmalonyl-CoA, and other modifications to help generate the final products. The loading module (residues 1-927, LM with an inactive acyltransferase domain) preferentially decarboxylates malonyl-GfsA acyl carrier protein of the LM (ACP-LM) over methylmalonyl-GfsA ACP-LM and has no activity on malonyl-CoA or methymalonyl-CoA. LM decarboxylates malonyl-ACP-LM better than the malonyl-ACP-1 module of GfsA (i.e. the next module in the same protein) and has no activity on other malonyl-ACP modules. The sequence is that of Polyketide synthase GfsA from Streptomyces halstedii.